The chain runs to 196 residues: Glycerol-3-phosphate acyltransferase 2 (196 aa).

5 helical membrane-spanning segments follow: residues 2–22, 52–72, 80–100, 112–132, and 137–156; these read GWWLFPILGYFIGSIPFSYLI, VGGICLLLDALKGFFPVFITI, IVSLTAIATVLGHDFPIFMKF, IIFCLSWPTGLVFTLTWLVIV, and YASLGSLVALYVSALLGYLL.

It belongs to the PlsY family. In terms of assembly, probably interacts with PlsX.

It localises to the cell inner membrane. It catalyses the reaction an acyl phosphate + sn-glycerol 3-phosphate = a 1-acyl-sn-glycero-3-phosphate + phosphate. It functions in the pathway lipid metabolism; phospholipid metabolism. Functionally, catalyzes the transfer of an acyl group from acyl-phosphate (acyl-PO(4)) to glycerol-3-phosphate (G3P) to form lysophosphatidic acid (LPA). This enzyme utilizes acyl-phosphate as fatty acyl donor, but not acyl-CoA or acyl-ACP. The sequence is that of Glycerol-3-phosphate acyltransferase 2 from Thermotoga maritima (strain ATCC 43589 / DSM 3109 / JCM 10099 / NBRC 100826 / MSB8).